We begin with the raw amino-acid sequence, 235 residues long: MITYETWDIEQKPTFPIDNNEKGALHVLSWAYDHYSDDLLYACSFGIEGIVLIDLISQVRDDAEIVFLDTHLHFPETYETIERVKQAYPRLRIHLQTPSLSLAEQEKQFGAELWKTDPNKCCELRKIIPLRQAMTGKKAWISGLRREQSPTRQHVEFINLDKKFQNIKVCPLIHWTWKDVWRYVHRHNLSYNPLHDRGYPSIGCAPCTAPAYTEEDLRSGRWAGLGKTECGLHES.

[4Fe-4S] cluster-binding residues include cysteine 121, cysteine 122, cysteine 204, and cysteine 207. Residue cysteine 230 is the Nucleophile; cysteine thiosulfonate intermediate of the active site.

The protein belongs to the PAPS reductase family. CysH subfamily. It depends on [4Fe-4S] cluster as a cofactor.

The protein resides in the cytoplasm. The enzyme catalyses [thioredoxin]-disulfide + sulfite + AMP + 2 H(+) = adenosine 5'-phosphosulfate + [thioredoxin]-dithiol. Its pathway is sulfur metabolism; hydrogen sulfide biosynthesis; sulfite from sulfate. Functionally, catalyzes the formation of sulfite from adenosine 5'-phosphosulfate (APS) using thioredoxin as an electron donor. This Anoxybacillus flavithermus (strain DSM 21510 / WK1) protein is Adenosine 5'-phosphosulfate reductase.